The primary structure comprises 452 residues: Glutamate--tRNA ligase 2 (452 aa).

The 'HIGH' region signature appears at 8-18; that stretch reads PSPTGRLHVGN. Positions 246 to 250 match the 'KMSKS' region motif; the sequence is KLSKR. Lys-249 contacts ATP.

It belongs to the class-I aminoacyl-tRNA synthetase family. Glutamate--tRNA ligase type 1 subfamily. As to quaternary structure, monomer.

Its subcellular location is the cytoplasm. The enzyme catalyses tRNA(Glu) + L-glutamate + ATP = L-glutamyl-tRNA(Glu) + AMP + diphosphate. In terms of biological role, catalyzes the attachment of glutamate to tRNA(Glu) in a two-step reaction: glutamate is first activated by ATP to form Glu-AMP and then transferred to the acceptor end of tRNA(Glu). The sequence is that of Glutamate--tRNA ligase 2 from Erythrobacter litoralis (strain HTCC2594).